Here is a 136-residue protein sequence, read N- to C-terminus: MRHYEIVFMVHPDQSGQVPAMIERYRSIIEGAAGRIHRLEDWGRRQLAYPIAKLHKAHYVLMNIECDQATLEELESGFRFNDAVLRSLTIRRDEAVTEPSALARSGSDAEADRAPADEGSVEAAGAEPGSEAEAEA.

The interval 96 to 136 (VTEPSALARSGSDAEADRAPADEGSVEAAGAEPGSEAEAEA) is disordered.

Belongs to the bacterial ribosomal protein bS6 family.

Functionally, binds together with bS18 to 16S ribosomal RNA. The protein is Small ribosomal subunit protein bS6 of Methylococcus capsulatus (strain ATCC 33009 / NCIMB 11132 / Bath).